We begin with the raw amino-acid sequence, 463 residues long: Bifunctional protein HldE (463 aa).

The tract at residues 1 to 315 (MKKILVIGDL…LILNQTHPKI (315 aa)) is ribokinase. 191-194 (NRAE) contacts ATP. D260 is a catalytic residue. The segment at 334 to 463 (FTNGCFDILH…IEKIKRTHND (130 aa)) is cytidylyltransferase.

It in the N-terminal section; belongs to the carbohydrate kinase PfkB family. In the C-terminal section; belongs to the cytidylyltransferase family. Homodimer.

The catalysed reaction is D-glycero-beta-D-manno-heptose 7-phosphate + ATP = D-glycero-beta-D-manno-heptose 1,7-bisphosphate + ADP + H(+). The enzyme catalyses D-glycero-beta-D-manno-heptose 1-phosphate + ATP + H(+) = ADP-D-glycero-beta-D-manno-heptose + diphosphate. It participates in nucleotide-sugar biosynthesis; ADP-L-glycero-beta-D-manno-heptose biosynthesis; ADP-L-glycero-beta-D-manno-heptose from D-glycero-beta-D-manno-heptose 7-phosphate: step 1/4. It functions in the pathway nucleotide-sugar biosynthesis; ADP-L-glycero-beta-D-manno-heptose biosynthesis; ADP-L-glycero-beta-D-manno-heptose from D-glycero-beta-D-manno-heptose 7-phosphate: step 3/4. The protein operates within bacterial outer membrane biogenesis; LPS core biosynthesis. Functionally, catalyzes the phosphorylation of D-glycero-D-manno-heptose 7-phosphate at the C-1 position to selectively form D-glycero-beta-D-manno-heptose-1,7-bisphosphate. Its function is as follows. Catalyzes the ADP transfer from ATP to D-glycero-beta-D-manno-heptose 1-phosphate, yielding ADP-D-glycero-beta-D-manno-heptose. This Helicobacter pylori (strain J99 / ATCC 700824) (Campylobacter pylori J99) protein is Bifunctional protein HldE.